A 208-amino-acid polypeptide reads, in one-letter code: Protein-methionine-sulfoxide reductase heme-binding subunit MsrQ (208 aa).

A run of 6 helical transmembrane segments spans residues 16–36, 53–73, 82–102, 118–138, 156–176, and 178–198; these read IAVFVACLLPLVWYGARFVGG, WGLIFLLASLAATPARLLWGW, MVGLFAFFYVCLHLLSYIGLD, TYITVGMAALLLLVPLAVTST, LVYPAAVLGVLHYMLMVKADL, and EPLIFAGILGLLLAVRLVPAV.

It belongs to the MsrQ family. In terms of assembly, heterodimer of a catalytic subunit (MsrP) and a heme-binding subunit (MsrQ). The cofactor is FMN. Heme b serves as cofactor.

Its subcellular location is the cell inner membrane. Its function is as follows. Part of the MsrPQ system that repairs oxidized periplasmic proteins containing methionine sulfoxide residues (Met-O), using respiratory chain electrons. Thus protects these proteins from oxidative-stress damage caused by reactive species of oxygen and chlorine generated by the host defense mechanisms. MsrPQ is essential for the maintenance of envelope integrity under bleach stress, rescuing a wide series of structurally unrelated periplasmic proteins from methionine oxidation. MsrQ provides electrons for reduction to the reductase catalytic subunit MsrP, using the quinone pool of the respiratory chain. In Rhodospirillum rubrum (strain ATCC 11170 / ATH 1.1.1 / DSM 467 / LMG 4362 / NCIMB 8255 / S1), this protein is Protein-methionine-sulfoxide reductase heme-binding subunit MsrQ.